The primary structure comprises 776 residues: Cilium assembly protein DZIP1L (776 aa).

The C2H2-type zinc finger occupies 166–189; it reads HTCHLCDKTFMNATFLRGHIQRRH. Residues 196–450 adopt a coiled-coil conformation; the sequence is GKQKQEQQLG…RKVLAALRNN (255 aa). A phosphoserine mark is found at serine 425 and serine 426. Residues 520–776 are disordered; that stretch reads SRAKKRWEGT…SGSRPRIPGW (257 aa). Low complexity predominate over residues 600–618; it reads GPSSTPVSPGPGLSTPPFS. Positions 652–683 are enriched in polar residues; it reads WSDSETSEESAQSPGKGSDGLASSATLVQSMV. A compositionally biased stretch (basic and acidic residues) spans 685–694; sequence NLEKQLETPA. Polar residues predominate over residues 709–721; the sequence is TALQRSSTPARKT.

It belongs to the DZIP C2H2-type zinc-finger protein family. Interacts with SEPTIN2.

It localises to the cytoplasm. The protein localises to the cytoskeleton. Its subcellular location is the cilium basal body. It is found in the microtubule organizing center. The protein resides in the centrosome. It localises to the centriole. Involved in primary cilium formation. Probably acts as a transition zone protein required for localization of PKD1/PC1 and PKD2/PC2 to the ciliary membrane. This is Cilium assembly protein DZIP1L from Rattus norvegicus (Rat).